The sequence spans 339 residues: uncharacterized protein (339 aa).

Residues H17, H19, H197, and D278 each coordinate Zn(2+). D279 serves as a coordination point for substrate.

The protein belongs to the metallo-dependent hydrolases superfamily. Adenosine and AMP deaminases family. Adenine deaminase type 2 subfamily. Requires Zn(2+) as cofactor.

The protein localises to the cytoplasm. It is found in the nucleus. This is an uncharacterized protein from Schizosaccharomyces pombe (strain 972 / ATCC 24843) (Fission yeast).